Reading from the N-terminus, the 308-residue chain is Taste receptor type 2 member 41 (308 aa).

The Extracellular portion of the chain corresponds to 1-7 (MLPTLSV). Residues 8–28 (FFMLTFVLLCFLGILANGFIV) form a helical membrane-spanning segment. The Cytoplasmic segment spans residues 29–60 (LMLSREWLLRGRLLPSDMILFSLGTSRFFQQC). The helical transmembrane segment at 61–81 (VGLVNSFYYFLHLVEYSGSLA) threads the bilayer. The Extracellular segment spans residues 82–88 (RQLISLH). Residues 89–109 (WDFLNSATFWFCTWLSVLFCI) form a helical membrane-spanning segment. At 110 to 128 (KIANFSHPAFLWLKWRFPA) the chain is on the cytoplasmic side. The helical transmembrane segment at 129–149 (LVPWFLLGSILVSVIVTLLFF) threads the bilayer. Over 150–186 (WGNHTIYQAFLRRKFTGNTTFKEWNRRLEIDYFMPLK) the chain is Extracellular. N-linked (GlcNAc...) asparagine glycans are attached at residues asparagine 152 and asparagine 167. Residues 187-207 (VVTMSIPCSLFLVSILLLISS) traverse the membrane as a helical segment. Over 208-239 (LRRHSLRMQHNTHSLQDPNVQAHSRALKSLIS) the chain is Cytoplasmic. A helical transmembrane segment spans residues 240–260 (FLVLYAVSFVSMIIDATVFIS). The Extracellular portion of the chain corresponds to 261-264 (SDNV). The chain crosses the membrane as a helical span at residues 265–285 (WYWPWQIILYFCMSVHPFILI). At 286–308 (TNNLRFRGTFRQLLLLARGFWVA) the chain is on the cytoplasmic side.

It belongs to the G-protein coupled receptor T2R family. Expressed in subsets of taste receptor cells of the tongue and palate epithelium and exclusively in gustducin-positive cells.

The protein resides in the membrane. In terms of biological role, receptor that may play a role in the perception of bitterness and is gustducin-linked. May play a role in sensing the chemical composition of the gastrointestinal content. The activity of this receptor may stimulate alpha gustducin, mediate PLC-beta-2 activation and lead to the gating of TRPM5. This chain is Taste receptor type 2 member 41 (Tas2r41), found in Mus musculus (Mouse).